We begin with the raw amino-acid sequence, 503 residues long: Poxin-Schlafen (503 aa).

Histidine 15 acts as the Proton donor in catalysis. Tyrosine 136 functions as the Shared with catalytic histidine of dimeric partner in the catalytic mechanism. Lysine 140 serves as the catalytic Proton acceptor; shared with catalytic histidine of dimeric partner.

The protein in the N-terminal section; belongs to the poxin family. This sequence in the C-terminal section; belongs to the Schlafen protein family. Subgroup poxviridae B3 subfamily. As to quaternary structure, homodimer.

The enzyme catalyses 2',3'-cGAMP + H2O = Gp(2'-5')Ap(3') + H(+). Functionally, nuclease that is responsible for viral evasion of host cGAS-STING innate immunity. Cleaves 2',3'-cGAMP which is produced by host cGAS following recognition of cytosolic DNA and blocks the subsequent 2',3'-cGAMP-mediated activation of TMEM173/STING, which normally spreads to adjacent cells and activates the interferon and NF-kappa-B immune responses. The protein is Poxin-Schlafen (OPG188) of Cynomys gunnisoni (Gunnison's prairie dog).